The following is a 434-amino-acid chain: Zinc finger and BTB domain-containing protein 8A (434 aa).

Residues 24–92 form the BTB domain; the sequence is CDCSILVEGK…VYSGKLSLTG (69 aa). Residues 134–238 are disordered; the sequence is SLSDKDTGSN…SGNHVSQSEE (105 aa). 2 positions are modified to phosphoserine: S161 and S167. Residues K172, K176, and K193 each participate in a glycyl lysine isopeptide (Lys-Gly) (interchain with G-Cter in SUMO2) cross-link. Residues 192-202 are compositionally biased toward basic and acidic residues; the sequence is AKHEQRKEPSK. The span at 226–238 shows a compositional bias: polar residues; it reads QTDSGNHVSQSEE. 2 C2H2-type zinc fingers span residues 275 to 297 and 303 to 326; these read FKCPFCTHVVKRKADLKRHLRCH and YPCQACGKRFSRLDHLSSHFRTIH. Residue K430 forms a Glycyl lysine isopeptide (Lys-Gly) (interchain with G-Cter in SUMO2) linkage.

The protein localises to the nucleus. Functionally, may be involved in transcriptional regulation. In Mus musculus (Mouse), this protein is Zinc finger and BTB domain-containing protein 8A (Zbtb8a).